The sequence spans 121 residues: uncharacterized protein (121 aa).

A signal peptide spans methionine 1–serine 31.

This sequence to B.burgdorferi BB0465 N-terminal region.

This is an uncharacterized protein from Methanocaldococcus jannaschii (strain ATCC 43067 / DSM 2661 / JAL-1 / JCM 10045 / NBRC 100440) (Methanococcus jannaschii).